Here is a 282-residue protein sequence, read N- to C-terminus: uncharacterized protein (282 aa).

The protein to M.tuberculosis Rv2161c and Rv3079c.

This is an uncharacterized protein from Mycobacterium tuberculosis (strain CDC 1551 / Oshkosh).